We begin with the raw amino-acid sequence, 520 residues long: Bifunctional purine biosynthesis protein PurH (520 aa).

The MGS-like domain maps to 1–146 (MAPVALLSVS…KNHADVAVLT (146 aa)).

It belongs to the PurH family.

The enzyme catalyses (6R)-10-formyltetrahydrofolate + 5-amino-1-(5-phospho-beta-D-ribosyl)imidazole-4-carboxamide = 5-formamido-1-(5-phospho-D-ribosyl)imidazole-4-carboxamide + (6S)-5,6,7,8-tetrahydrofolate. It catalyses the reaction IMP + H2O = 5-formamido-1-(5-phospho-D-ribosyl)imidazole-4-carboxamide. It functions in the pathway purine metabolism; IMP biosynthesis via de novo pathway; 5-formamido-1-(5-phospho-D-ribosyl)imidazole-4-carboxamide from 5-amino-1-(5-phospho-D-ribosyl)imidazole-4-carboxamide (10-formyl THF route): step 1/1. The protein operates within purine metabolism; IMP biosynthesis via de novo pathway; IMP from 5-formamido-1-(5-phospho-D-ribosyl)imidazole-4-carboxamide: step 1/1. The chain is Bifunctional purine biosynthesis protein PurH from Synechococcus sp. (strain CC9902).